The chain runs to 340 residues: Citramalyl-CoA lyase, mitochondrial (340 aa).

The N-terminal 22 residues, 1–22, are a transit peptide targeting the mitochondrion; the sequence is MALRLLRRAARGAAAAALLRLK. Residues Tyr-50, Lys-57, and Lys-61 each contribute to the substrate site. Lys-57 and Lys-61 each carry N6-acetyllysine. N6-acetyllysine; alternate is present on residues Lys-82 and Lys-92. An N6-succinyllysine; alternate mark is found at Lys-82 and Lys-92. Residue Arg-107 participates in substrate binding. Residues Glu-171 and Asp-206 each coordinate Mg(2+). 272–273 provides a ligand contact to substrate; the sequence is IH. Lys-309 carries the N6-succinyllysine modification. Asp-320 is a catalytic residue.

The protein belongs to the HpcH/HpaI aldolase family. Citrate lyase beta subunit-like subfamily. Homotrimer. It depends on Mg(2+) as a cofactor.

Its subcellular location is the mitochondrion. It carries out the reaction glyoxylate + acetyl-CoA + H2O = (S)-malate + CoA + H(+). The catalysed reaction is propanoyl-CoA + glyoxylate + H2O = 3-methylmalate + CoA + H(+). It catalyses the reaction (3S)-citramalyl-CoA = pyruvate + acetyl-CoA. The enzyme catalyses (S)-malyl-CoA + H2O = (S)-malate + CoA + H(+). Mitochondrial citramalyl-CoA lyase indirectly involved in the vitamin B12 metabolism. Converts citramalyl-CoA into acetyl-CoA and pyruvate in the C5-dicarboxylate catabolism pathway. The C5-dicarboxylate catabolism pathway is required to detoxify itaconate, a vitamin B12-poisoning metabolite. Also acts as a malate synthase in vitro, converting glyoxylate and acetyl-CoA to malate. Also displays malyl-CoA thioesterase activity. Also acts as a beta-methylmalate synthase in vitro, by mediating conversion of glyoxylate and propionyl-CoA to beta-methylmalate. Also has very weak citramalate synthase activity in vitro. The polypeptide is Citramalyl-CoA lyase, mitochondrial (Homo sapiens (Human)).